Consider the following 504-residue polypeptide: Probable cytochrome P450 513E1 (504 aa).

A helical transmembrane segment spans residues 1–21; that stretch reads MNLYISILILIISLIIFFKNN. Position 450 (C450) interacts with heme.

This sequence belongs to the cytochrome P450 family. Heme serves as cofactor.

The protein resides in the membrane. This Dictyostelium discoideum (Social amoeba) protein is Probable cytochrome P450 513E1 (cyp513E1).